We begin with the raw amino-acid sequence, 387 residues long: GTP-binding protein 10 (387 aa).

In terms of domain architecture, Obg spans 13-148; it reads GNFIDKLRLF…RIIHLDLKLI (136 aa). The OBG-type G domain occupies 149-344; sequence ADVGLVGFPN…LKNCIRKSLD (196 aa). GTP-binding positions include 155-162, 202-206, and 278-281; these read GFPNAGKS, DLPGL, and NKMD.

Belongs to the TRAFAC class OBG-HflX-like GTPase superfamily. OBG GTPase family.

The protein resides in the nucleus. It is found in the nucleolus. Its subcellular location is the chromosome. May be involved in the ribosome maturation process. Complements an ObgE(CgtA) function in E.coli ribosome maturation. Plays a role of GTPase in vitro. When missing, disorganization of the nucleolar architecture is observed. This is GTP-binding protein 10 (GTPBP10) from Homo sapiens (Human).